The primary structure comprises 310 residues: N-acetyl-gamma-glutamyl-phosphate reductase (310 aa).

Residue Cys117 is part of the active site.

This sequence belongs to the NAGSA dehydrogenase family. Type 2 subfamily.

The protein localises to the cytoplasm. It carries out the reaction N-acetyl-L-glutamate 5-semialdehyde + phosphate + NADP(+) = N-acetyl-L-glutamyl 5-phosphate + NADPH + H(+). It participates in amino-acid biosynthesis; L-arginine biosynthesis; N(2)-acetyl-L-ornithine from L-glutamate: step 3/4. In terms of biological role, catalyzes the NADPH-dependent reduction of N-acetyl-5-glutamyl phosphate to yield N-acetyl-L-glutamate 5-semialdehyde. The sequence is that of N-acetyl-gamma-glutamyl-phosphate reductase from Brucella ovis (strain ATCC 25840 / 63/290 / NCTC 10512).